We begin with the raw amino-acid sequence, 495 residues long: Zinc finger and SCAN domain-containing protein 5B (495 aa).

The tract at residues 1–40 (MAANWTLSWGQGGPCNSPGSDTPRSVASPETQLGNHDRNP) is disordered. The span at 17–34 (SPGSDTPRSVASPETQLG) shows a compositional bias: polar residues. Residues 44 to 126 (HMNFRMFSCP…DLLRNNRRPK (83 aa)) enclose the SCAN box domain. 2 disordered regions span residues 150 to 183 (APAS…RREQ) and 227 to 347 (ENRE…PDGQ). Positions 161–173 (VSSQWASSVNQMH) are enriched in polar residues. The span at 250–262 (RAKEGKEPQKRAS) shows a compositional bias: basic and acidic residues. The segment covering 292-310 (NLSSPKRSKPDASSISQEE) has biased composition (polar residues). C2H2-type zinc fingers lie at residues 355–377 (FACD…RRSH), 383–405 (FQCD…QRVH), 411–433 (YMCD…KRIH), 439–461 (FKCK…QRTH), and 467–489 (YKCP…LKTH).

It is found in the nucleus. Functionally, may be involved in transcriptional regulation. The protein is Zinc finger and SCAN domain-containing protein 5B (ZSCAN5B) of Homo sapiens (Human).